A 404-amino-acid polypeptide reads, in one-letter code: UBP1-associated protein 2C (404 aa).

The segment at 1 to 29 (MDMMKKRKLDENGNGLNTNGGGTIGPTRL) is disordered. 2 consecutive RRM domains span residues 75-152 (RKLF…LAAS) and 167-248 (RKIY…GKKG). Disordered regions lie at residues 246 to 270 (KKGG…HGEG) and 344 to 404 (GSGQ…PPNY).

As to expression, expressed in root apical and lateral meristems, young leaves and embryos.

The protein resides in the nucleus. In terms of biological role, heterogeneous nuclear ribonucleoprotein (hnRNP)-like protein that acts as a component of a complex regulating the turnover of mRNAs in the nucleus. Binds with high affinity to RNA molecules that contain U-rich sequences in 3'-UTRs. May function in complex with UBP1 and contribute to the stabilization of mRNAs in the nucleus. The polypeptide is UBP1-associated protein 2C (UBA2C) (Arabidopsis thaliana (Mouse-ear cress)).